The following is a 397-amino-acid chain: N(6)-adenosine-methyltransferase non-catalytic subunit METTL14 (397 aa).

Disordered regions lie at residues 37-67 (NAEDINSSRQLNSGGQREEEDGGASSSKKTP) and 368-397 (ELLRPKSPPPNSKVLRGRGRGFPRGRGRPR). The segment covering 40-51 (DINSSRQLNSGG) has biased composition (polar residues). Basic residues predominate over residues 382 to 397 (LRGRGRGFPRGRGRPR).

The protein belongs to the MT-A70-like family. As to quaternary structure, component of the WMM complex, a N6-methyltransferase complex composed of a catalytic subcomplex, named MAC, and of an associated subcomplex, named MACOM. The MAC subcomplex is composed of Ime4/Mettl3 and Mettl14. The MACOM subcomplex is composed of fl(2)d, Flacc/Xio, Hakai, vir, and, in some cases of nito.

Its subcellular location is the nucleus. In terms of biological role, non-catalytic component of the WMM complex, a complex that mediates N6-methyladenosine (m6A) methylation of mRNAs, a modification that plays a role in the efficiency of mRNA splicing and is required for sex determination. In the heterodimer formed with Ime4/Mettl3, Mettl14 constitutes the RNA-binding scaffold that recognizes the substrate rather than the catalytic core. Required for sex determination and dosage compensation via Sxl alternative splicing: m6A methylation acts as a key regulator of Sxl pre-mRNA and promotes female-specific alternative splicing of Sxl, which determines female physiognomy. M6A methylation is also required for neuronal functions. The polypeptide is N(6)-adenosine-methyltransferase non-catalytic subunit METTL14 (Drosophila melanogaster (Fruit fly)).